Here is a 682-residue protein sequence, read N- to C-terminus: Protein PilJ (682 aa).

The Cytoplasmic segment spans residues Met1–Arg14. The chain crosses the membrane as a helical span at residues Ser15 to Ala38. At Tyr39 to Arg306 the chain is on the periplasmic side. Residues Ser307–Arg333 traverse the membrane as a helical segment. Residues Glu334–Ala682 are Cytoplasmic-facing. The 52-residue stretch at Asp347–Glu398 folds into the HAMP domain. A Methyl-accepting transducer domain is found at Thr403–Gln639.

This sequence belongs to the methyl-accepting chemotaxis (MCP) protein family.

It localises to the cell inner membrane. May be a part of a signal-transduction system that regulates twitching motility by controlling pilus function (extension and retraction). The polypeptide is Protein PilJ (pilJ) (Pseudomonas aeruginosa (strain ATCC 15692 / DSM 22644 / CIP 104116 / JCM 14847 / LMG 12228 / 1C / PRS 101 / PAO1)).